We begin with the raw amino-acid sequence, 475 residues long: Ras-GEF domain-containing family member 1B-B (475 aa).

Residues Met-1–Ser-19 are compositionally biased toward polar residues. The segment at Met-1 to Pro-25 is disordered. An N-terminal Ras-GEF domain is found at Arg-36 to Thr-166. Residues Asp-209–Pro-456 form the Ras-GEF domain. A disordered region spans residues Glu-452–Met-475.

Functionally, guanine nucleotide exchange factor (GEF) for Ras family proteins. The polypeptide is Ras-GEF domain-containing family member 1B-B (Danio rerio (Zebrafish)).